Consider the following 329-residue polypeptide: uncharacterized protein (329 aa).

9 helical membrane passes run asparagine 5 to valine 24, isoleucine 34 to phenylalanine 56, phenylalanine 92 to glycine 114, isoleucine 124 to tyrosine 146, serine 159 to leucine 181, threonine 196 to leucine 218, phenylalanine 231 to tyrosine 253, leucine 263 to glycine 285, and phenylalanine 306 to threonine 328.

The protein resides in the cell membrane. This is an uncharacterized protein from Archaeoglobus fulgidus (strain ATCC 49558 / DSM 4304 / JCM 9628 / NBRC 100126 / VC-16).